Here is a 386-residue protein sequence, read N- to C-terminus: Phosphomevalonate dehydratase large subunit (386 aa).

(R)-5-phosphomevalonate-binding residues include glycine 48, valine 49, serine 50, asparagine 53, arginine 63, asparagine 79, and proline 80. Cysteine 110 provides a ligand contact to [4Fe-4S] cluster. The (R)-5-phosphomevalonate site is built by glutamate 129 and serine 130. [4Fe-4S] cluster-binding residues include cysteine 283 and cysteine 342. Lysine 361 contacts (R)-5-phosphomevalonate.

Belongs to the AcnX type II large subunit family. Heterodimer composed of a large subunit (PMDh-L) and a small subunit (PMDh-S). It depends on [4Fe-4S] cluster as a cofactor.

It catalyses the reaction (R)-5-phosphomevalonate = (2E)-3-methyl-5-phosphooxypent-2-enoate + H2O. Its pathway is isoprenoid biosynthesis; isopentenyl diphosphate biosynthesis via mevalonate pathway. Functionally, component of a hydro-lyase that catalyzes the dehydration of mevalonate 5-phosphate (MVA5P) to form trans-anhydromevalonate 5-phosphate (tAHMP). Involved in the archaeal mevalonate (MVA) pathway, which provides fundamental precursors for isoprenoid biosynthesis, such as isopentenyl diphosphate (IPP) and dimethylallyl diphosphate (DMAPP). The polypeptide is Phosphomevalonate dehydratase large subunit (Thermococcus kodakarensis (strain ATCC BAA-918 / JCM 12380 / KOD1) (Pyrococcus kodakaraensis (strain KOD1))).